A 498-amino-acid chain; its full sequence is MTYLLALDQGTSSSRSIVFDERGRIVAQAQRELPQIYPRPGWVEHDPREIWRTQLATAQDALREARITAQDVRALGITNQRETTVLWNRRTGQPVHHAIVWQDRRAEPACAQLREQGHAAAIQAKTGLLIDAYFSGTKLQWLLDHVPGARDAAEAGELAFGTVDSWLIWQLTGGTRHVTDVSNASRTMLFNVHTNQWDDELLQLLRIPRALMPEVLPSASDFGATDAALLGGPIAIGGVAGDQQSALFGQACFTAGMAKNTYGTGCFMLMHTGSRFQKSENGLLTTSAAQASRSPEYAMEGSVFVGGAVVQWLRDGLRAISASSEVQALAESVPDSGGVMMVPAFTGLGAPYWKPDARGTITGLTRGTTIAHIARAALESIAYQSAALLAAMSRDAVAAGGAPVSELRVDGGACVNDLLMQFQADLLGIPVVRPAVVETTALGAAYLAGLASGVYASTDELSALWQAERRFTPTLPRSQAEALMARWEHAVAQAVLPG.

Threonine 11 serves as a coordination point for ADP. Residues threonine 11, serine 12, and serine 13 each contribute to the ATP site. Threonine 11 is a binding site for sn-glycerol 3-phosphate. Arginine 15 is a binding site for ADP. Residues arginine 81, glutamate 82, tyrosine 133, and aspartate 242 each contribute to the sn-glycerol 3-phosphate site. Positions 81, 82, 133, 242, and 243 each coordinate glycerol. 2 residues coordinate ADP: threonine 264 and glycine 307. The ATP site is built by threonine 264, glycine 307, glutamine 311, and glycine 412. Glycine 412 and asparagine 416 together coordinate ADP.

This sequence belongs to the FGGY kinase family.

It catalyses the reaction glycerol + ATP = sn-glycerol 3-phosphate + ADP + H(+). Its pathway is polyol metabolism; glycerol degradation via glycerol kinase pathway; sn-glycerol 3-phosphate from glycerol: step 1/1. Inhibited by fructose 1,6-bisphosphate (FBP). Functionally, key enzyme in the regulation of glycerol uptake and metabolism. Catalyzes the phosphorylation of glycerol to yield sn-glycerol 3-phosphate. This Acidovorax ebreus (strain TPSY) (Diaphorobacter sp. (strain TPSY)) protein is Glycerol kinase.